The following is an 89-amino-acid chain: MSITAEEKARVMKEFATKEGDTGSPEVQVAILSSRIATLTEHFKTHKKDNHGRRGLLKMVATRRKLLDYTKAKDEARYQDLIKRLGLRR.

It belongs to the universal ribosomal protein uS15 family. Part of the 30S ribosomal subunit. Forms a bridge to the 50S subunit in the 70S ribosome, contacting the 23S rRNA.

Its function is as follows. One of the primary rRNA binding proteins, it binds directly to 16S rRNA where it helps nucleate assembly of the platform of the 30S subunit by binding and bridging several RNA helices of the 16S rRNA. Forms an intersubunit bridge (bridge B4) with the 23S rRNA of the 50S subunit in the ribosome. The chain is Small ribosomal subunit protein uS15 from Roseobacter denitrificans (strain ATCC 33942 / OCh 114) (Erythrobacter sp. (strain OCh 114)).